Reading from the N-terminus, the 738-residue chain is MDPFFLNTQHVELLVSGKQSSPQDLLGIVSESLNQDRIVLFRPGAETVFVELRGKIQQAESHHSGIFSLPVMKGISPQDYRVYHQNGLLAHDPYAFPLLWGEIDSFLFHEGTHQRIYERMGAIPCEIDGVPGVRFIVWAPHAQRVSVIGDFNGWHGLVNPLHKVSDQGVWELFVPGLTAGACYKWEMVTESGQVLIKSDPYGKFFGPPPWSVSVVIDDSYEWTDSEWLEERIKKTEGPMNIYEVHVGSWRWQEGQPLNYKELADQLALYCKQMHYTHVELLPVTEHPLNESWGYQTTGYYAPTSRYGSFEDLQYFIDTMHQHGIGVILDWVPGHFPIDSFAMSGFDGTPLYEYTRNPSPLHPHWHTYTFDYAKPEVCNFLLGSVLFWIDKMHVDGIRVDAVSSMLYLDYGRYAGEWVPNRYGGRENLDAIRFLQQFNTVIHEKYPGVLTFAEESTTFPKITVSVEEGGLGFDYKWNMGWMHDTLHYFEKDFPYRPYHQSDLTFPQWYAFSERFLLPFSHDEVVHGKRSLIGKMPGDAWRQFAQLRLLLGYQICQPGKKLLFMGGEFGQGREWSPGRELDWELLDISYHQGVHLCSQELNALYVQSPQLWQADHLPSSFRWVDFSDVRNGVVAYLRFADADAKKALLCVHHFGVGYFPHYLLPILPLESCDLLMNTDDTRFGGSGKGFREPEILTPEIARQEREAAGLIEADDESGPDCWGLDIELPPSATLIFSVTLQ.

Aspartate 399 serves as the catalytic Nucleophile. Residue glutamate 452 is the Proton donor of the active site.

It belongs to the glycosyl hydrolase 13 family. GlgB subfamily. Monomer.

The enzyme catalyses Transfers a segment of a (1-&gt;4)-alpha-D-glucan chain to a primary hydroxy group in a similar glucan chain.. It participates in glycan biosynthesis; glycogen biosynthesis. In terms of biological role, catalyzes the formation of the alpha-1,6-glucosidic linkages in glycogen by scission of a 1,4-alpha-linked oligosaccharide from growing alpha-1,4-glucan chains and the subsequent attachment of the oligosaccharide to the alpha-1,6 position. In Chlamydia trachomatis serovar D (strain ATCC VR-885 / DSM 19411 / UW-3/Cx), this protein is 1,4-alpha-glucan branching enzyme GlgB.